The following is a 138-amino-acid chain: U1 small nuclear ribonucleoprotein C (138 aa).

The Matrin-type zinc finger occupies 4-36 (FYCDYCDTYLTHDSPSVRKTHCSGRKHKENVRD). Y8 is subject to Phosphotyrosine. A Phosphoserine modification is found at S17. The residue at position 52 (K52) is an N6-acetyllysine. Residues 62 to 99 (IPPNLFSAPPLGGPMIPPPHPSMMGPPPPGMMPVGPPP) form a disordered region. Residues 72-99 (LGGPMIPPPHPSMMGPPPPGMMPVGPPP) show a composition bias toward pro residues.

The protein belongs to the U1 small nuclear ribonucleoprotein C family. In terms of assembly, component of the U1 snRNP. The U1 snRNP is composed of the U1 snRNA and the 7 core Sm proteins SNRPB, SNRPD1, SNRPD2, SNRPD3, SNRPE, SNRPF and SNRPG that assemble in a heptameric protein ring on the Sm site of the small nuclear RNA to form the core snRNP, and at least 3 U1 snRNP-specific proteins SNRNP70/U1-70K, SNRPA/U1-A and SNRPC/U1-C. SNRPC/U1-C interacts with U1 snRNA and the 5' splice-site region of the pre-mRNA. Interacts (via N-terminus) with TIA1 (via C-terminus); thereby promoting spliceosomal U1 snRNP recruitment to 5' splice sites.

Its subcellular location is the nucleus. Functionally, component of the spliceosomal U1 snRNP, which is essential for recognition of the pre-mRNA 5' splice-site and the subsequent assembly of the spliceosome. SNRPC/U1-C is directly involved in initial 5' splice-site recognition for both constitutive and regulated alternative splicing. The interaction with the 5' splice-site seems to precede base-pairing between the pre-mRNA and the U1 snRNA. Stimulates commitment or early (E) complex formation by stabilizing the base pairing of the 5' end of the U1 snRNA and the 5' splice-site region. This Monodelphis domestica (Gray short-tailed opossum) protein is U1 small nuclear ribonucleoprotein C.